Reading from the N-terminus, the 200-residue chain is Recombination protein RecR (200 aa).

The C4-type zinc finger occupies 57–72 (CSHCRTFTENERCEIC). The region spanning 81 to 176 (GLLCVVESPA…KVSRIAHGVP (96 aa)) is the Toprim domain.

Belongs to the RecR family.

Functionally, may play a role in DNA repair. It seems to be involved in an RecBC-independent recombinational process of DNA repair. It may act with RecF and RecO. This is Recombination protein RecR from Aeromonas hydrophila subsp. hydrophila (strain ATCC 7966 / DSM 30187 / BCRC 13018 / CCUG 14551 / JCM 1027 / KCTC 2358 / NCIMB 9240 / NCTC 8049).